The chain runs to 206 residues: MHDLIMSMAEVDISLDIGTKAVRLARAAASSYLRNEKLPDPPADPIFQEKHGVFTTINTYPGNTLRGCIGFPEPYYPLGEGIIRSSIYAATEDPRFEPMKIDEISHVTFEVSILTQPVEITVNPEDRPKAVHIGRDGLIAVYNGASGLLLPQVATEYRMNPEEFLEALCEKAGLWEGCWKYKKVKISKFQATVFGEKDPEGVVEKR.

Positions 16–205 (DIGTKAVRLA…EKDPEGVVEK (190 aa)) constitute an AMMECR1 domain.

This is Protein Ta0236 from Thermoplasma acidophilum (strain ATCC 25905 / DSM 1728 / JCM 9062 / NBRC 15155 / AMRC-C165).